We begin with the raw amino-acid sequence, 693 residues long: Elongation factor G 1 (693 aa).

The tr-type G domain occupies 4–281; sequence NKLRNIGISA…AVTRFLPSPH (278 aa). GTP-binding positions include 13 to 20, 80 to 84, and 134 to 137; these read AHIDSGKT, DTPGH, and NKCD.

This sequence belongs to the TRAFAC class translation factor GTPase superfamily. Classic translation factor GTPase family. EF-G/EF-2 subfamily.

It is found in the cytoplasm. In terms of biological role, catalyzes the GTP-dependent ribosomal translocation step during translation elongation. During this step, the ribosome changes from the pre-translocational (PRE) to the post-translocational (POST) state as the newly formed A-site-bound peptidyl-tRNA and P-site-bound deacylated tRNA move to the P and E sites, respectively. Catalyzes the coordinated movement of the two tRNA molecules, the mRNA and conformational changes in the ribosome. The protein is Elongation factor G 1 of Borrelia garinii subsp. bavariensis (strain ATCC BAA-2496 / DSM 23469 / PBi) (Borreliella bavariensis).